The chain runs to 176 residues: Small ribosomal subunit protein uS5 (176 aa).

The region spanning 11 to 74 is the S5 DRBM domain; the sequence is LSEVLVDVNR…QAAKKRMMKV (64 aa).

Belongs to the universal ribosomal protein uS5 family. As to quaternary structure, part of the 30S ribosomal subunit. Contacts proteins S4 and S8.

In terms of biological role, with S4 and S12 plays an important role in translational accuracy. Functionally, located at the back of the 30S subunit body where it stabilizes the conformation of the head with respect to the body. The protein is Small ribosomal subunit protein uS5 of Rickettsia africae (strain ESF-5).